The following is a 426-amino-acid chain: Serine--tRNA ligase (426 aa).

Residue 231–233 coordinates L-serine; that stretch reads TAE. Residue 262-264 participates in ATP binding; sequence RSE. Glu-285 contacts L-serine. Position 349-352 (349-352) interacts with ATP; sequence EISS. Residue Ser-384 participates in L-serine binding.

The protein belongs to the class-II aminoacyl-tRNA synthetase family. Type-1 seryl-tRNA synthetase subfamily. Homodimer. The tRNA molecule binds across the dimer.

The protein localises to the cytoplasm. It carries out the reaction tRNA(Ser) + L-serine + ATP = L-seryl-tRNA(Ser) + AMP + diphosphate + H(+). It catalyses the reaction tRNA(Sec) + L-serine + ATP = L-seryl-tRNA(Sec) + AMP + diphosphate + H(+). It participates in aminoacyl-tRNA biosynthesis; selenocysteinyl-tRNA(Sec) biosynthesis; L-seryl-tRNA(Sec) from L-serine and tRNA(Sec): step 1/1. Its function is as follows. Catalyzes the attachment of serine to tRNA(Ser). Is also able to aminoacylate tRNA(Sec) with serine, to form the misacylated tRNA L-seryl-tRNA(Sec), which will be further converted into selenocysteinyl-tRNA(Sec). The protein is Serine--tRNA ligase of Laribacter hongkongensis (strain HLHK9).